The chain runs to 895 residues: Alanine--tRNA ligase (895 aa).

Residues His586, His590, Cys690, and His694 each coordinate Zn(2+).

Belongs to the class-II aminoacyl-tRNA synthetase family. Zn(2+) is required as a cofactor.

Its subcellular location is the cytoplasm. It catalyses the reaction tRNA(Ala) + L-alanine + ATP = L-alanyl-tRNA(Ala) + AMP + diphosphate. Functionally, catalyzes the attachment of alanine to tRNA(Ala) in a two-step reaction: alanine is first activated by ATP to form Ala-AMP and then transferred to the acceptor end of tRNA(Ala). Also edits incorrectly charged Ser-tRNA(Ala) and Gly-tRNA(Ala) via its editing domain. The polypeptide is Alanine--tRNA ligase (Korarchaeum cryptofilum (strain OPF8)).